Here is a 312-residue protein sequence, read N- to C-terminus: Acetyl-coenzyme A carboxylase carboxyl transferase subunit alpha (312 aa).

Positions 25-286 (GDDSAVEILK…GNYIIEKLNE (262 aa)) constitute a CoA carboxyltransferase C-terminal domain.

Belongs to the AccA family. Acetyl-CoA carboxylase is a heterohexamer composed of biotin carboxyl carrier protein (AccB), biotin carboxylase (AccC) and two subunits each of ACCase subunit alpha (AccA) and ACCase subunit beta (AccD).

The protein localises to the cytoplasm. The enzyme catalyses N(6)-carboxybiotinyl-L-lysyl-[protein] + acetyl-CoA = N(6)-biotinyl-L-lysyl-[protein] + malonyl-CoA. It functions in the pathway lipid metabolism; malonyl-CoA biosynthesis; malonyl-CoA from acetyl-CoA: step 1/1. In terms of biological role, component of the acetyl coenzyme A carboxylase (ACC) complex. First, biotin carboxylase catalyzes the carboxylation of biotin on its carrier protein (BCCP) and then the CO(2) group is transferred by the carboxyltransferase to acetyl-CoA to form malonyl-CoA. The polypeptide is Acetyl-coenzyme A carboxylase carboxyl transferase subunit alpha (Campylobacter hominis (strain ATCC BAA-381 / DSM 21671 / CCUG 45161 / LMG 19568 / NCTC 13146 / CH001A)).